We begin with the raw amino-acid sequence, 401 residues long: uncharacterized protein (401 aa).

[4Fe-4S] cluster contacts are provided by Cys7, Cys13, Cys16, and Cys94. Gln230, Tyr259, Glu280, and Asp328 together coordinate S-adenosyl-L-methionine. Cys355 acts as the Nucleophile in catalysis.

The protein belongs to the class I-like SAM-binding methyltransferase superfamily. RNA M5U methyltransferase family.

This is an uncharacterized protein from Chlamydia caviae (strain ATCC VR-813 / DSM 19441 / 03DC25 / GPIC) (Chlamydophila caviae).